A 233-amino-acid polypeptide reads, in one-letter code: Large ribosomal subunit protein uL1 (233 aa).

Belongs to the universal ribosomal protein uL1 family. As to quaternary structure, part of the 50S ribosomal subunit.

In terms of biological role, binds directly to 23S rRNA. The L1 stalk is quite mobile in the ribosome, and is involved in E site tRNA release. Its function is as follows. Protein L1 is also a translational repressor protein, it controls the translation of the L11 operon by binding to its mRNA. This chain is Large ribosomal subunit protein uL1, found in Deinococcus geothermalis (strain DSM 11300 / CIP 105573 / AG-3a).